We begin with the raw amino-acid sequence, 509 residues long: Maturase K (509 aa).

Belongs to the intron maturase 2 family. MatK subfamily.

The protein resides in the plastid. Its subcellular location is the chloroplast. Functionally, usually encoded in the trnK tRNA gene intron. Probably assists in splicing its own and other chloroplast group II introns. In Dalea purpurea (Violet prairie clover), this protein is Maturase K.